Reading from the N-terminus, the 459-residue chain is Mitochondrial distribution and morphology protein 10 (459 aa).

Belongs to the MDM10 family. In terms of assembly, component of the ER-mitochondria encounter structure (ERMES) or MDM complex, composed of mmm1, mdm10, mdm12 and mdm34. Associates with the mitochondrial outer membrane sorting assembly machinery SAM(core) complex.

It localises to the mitochondrion outer membrane. Its function is as follows. Component of the ERMES/MDM complex, which serves as a molecular tether to connect the endoplasmic reticulum and mitochondria. Components of this complex are involved in the control of mitochondrial shape and protein biogenesis and may function in phospholipid exchange. mdm10 is involved in the late assembly steps of the general translocase of the mitochondrial outer membrane (TOM complex). Functions in the tom40-specific route of the assembly of outer membrane beta-barrel proteins, including the association of tom40 with the receptor tom22 and small TOM proteins. Can associate with the SAM(core) complex as well as the mdm12-mmm1 complex, both involved in late steps of the major beta-barrel assembly pathway, that is responsible for biogenesis of all outer membrane beta-barrel proteins. May act as a switch that shuttles between both complexes and channels precursor proteins into the tom40-specific pathway. Plays a role in mitochondrial morphology and in the inheritance of mitochondria. The polypeptide is Mitochondrial distribution and morphology protein 10 (mdmB) (Aspergillus terreus (strain NIH 2624 / FGSC A1156)).